The sequence spans 89 residues: Small ribosomal subunit protein uS15 (89 aa).

The protein belongs to the universal ribosomal protein uS15 family. As to quaternary structure, part of the 30S ribosomal subunit. Forms a bridge to the 50S subunit in the 70S ribosome, contacting the 23S rRNA.

Its function is as follows. One of the primary rRNA binding proteins, it binds directly to 16S rRNA where it helps nucleate assembly of the platform of the 30S subunit by binding and bridging several RNA helices of the 16S rRNA. In terms of biological role, forms an intersubunit bridge (bridge B4) with the 23S rRNA of the 50S subunit in the ribosome. In Staphylococcus aureus (strain JH1), this protein is Small ribosomal subunit protein uS15.